The primary structure comprises 211 residues: Imidazole glycerol phosphate synthase subunit HisH (211 aa).

One can recognise a Glutamine amidotransferase type-1 domain in the interval 1–206; that stretch reads MIGIIDYGRG…GKWVNEDATV (206 aa). Cysteine 79 serves as the catalytic Nucleophile. Catalysis depends on residues histidine 181 and glutamate 183.

As to quaternary structure, heterodimer of HisH and HisF.

Its subcellular location is the cytoplasm. It carries out the reaction 5-[(5-phospho-1-deoxy-D-ribulos-1-ylimino)methylamino]-1-(5-phospho-beta-D-ribosyl)imidazole-4-carboxamide + L-glutamine = D-erythro-1-(imidazol-4-yl)glycerol 3-phosphate + 5-amino-1-(5-phospho-beta-D-ribosyl)imidazole-4-carboxamide + L-glutamate + H(+). The enzyme catalyses L-glutamine + H2O = L-glutamate + NH4(+). The protein operates within amino-acid biosynthesis; L-histidine biosynthesis; L-histidine from 5-phospho-alpha-D-ribose 1-diphosphate: step 5/9. Its function is as follows. IGPS catalyzes the conversion of PRFAR and glutamine to IGP, AICAR and glutamate. The HisH subunit catalyzes the hydrolysis of glutamine to glutamate and ammonia as part of the synthesis of IGP and AICAR. The resulting ammonia molecule is channeled to the active site of HisF. The protein is Imidazole glycerol phosphate synthase subunit HisH of Desulfitobacterium hafniense (strain DSM 10664 / DCB-2).